A 467-amino-acid chain; its full sequence is ATP synthase subunit beta (467 aa).

Position 156–163 (156–163 (GGAGVGKT)) interacts with ATP.

The protein belongs to the ATPase alpha/beta chains family. In terms of assembly, F-type ATPases have 2 components, CF(1) - the catalytic core - and CF(0) - the membrane proton channel. CF(1) has five subunits: alpha(3), beta(3), gamma(1), delta(1), epsilon(1). CF(0) has three main subunits: a(1), b(2) and c(9-12). The alpha and beta chains form an alternating ring which encloses part of the gamma chain. CF(1) is attached to CF(0) by a central stalk formed by the gamma and epsilon chains, while a peripheral stalk is formed by the delta and b chains.

The protein resides in the cell inner membrane. The catalysed reaction is ATP + H2O + 4 H(+)(in) = ADP + phosphate + 5 H(+)(out). Produces ATP from ADP in the presence of a proton gradient across the membrane. The catalytic sites are hosted primarily by the beta subunits. This Cupriavidus taiwanensis (strain DSM 17343 / BCRC 17206 / CCUG 44338 / CIP 107171 / LMG 19424 / R1) (Ralstonia taiwanensis (strain LMG 19424)) protein is ATP synthase subunit beta.